A 1272-amino-acid polypeptide reads, in one-letter code: AF4/FMR2 family member 2 (1272 aa).

Disordered stretches follow at residues 93–183 (IPKN…LTQD), 201–225 (QIGEAEESNPSAKEDSNPNSSGEDA), and 283–302 (AYVRPMDGQDQAPDISPTLK). Residues 97 to 107 (SVPQNPNNKNE) are compositionally biased toward polar residues. The span at 151–160 (SKPEWSRDSH) shows a compositional bias: basic and acidic residues. Residues 161–183 (NPSTVLASQASGQPNKMQTLTQD) are compositionally biased toward polar residues. At Ser-391 the chain carries Phosphoserine. Disordered regions lie at residues 418–491 (KAKP…KWQL), 535–687 (TNAS…DQEE), 779–829 (SLHA…PEKK), and 842–903 (PPCI…QDKN). Over residues 426-438 (VNPPLATPQPPPA) the composition is skewed to pro residues. Low complexity predominate over residues 439-452 (VQASGGSGSSSESE). Thr-478 bears the Phosphothreonine mark. Positions 543–558 (EPKERPLLSLIREKAR) are enriched in basic and acidic residues. Residues 576-586 (STTSETVSQRT) are compositionally biased toward polar residues. Basic and acidic residues predominate over residues 616–629 (PKEKESVELHDPPR). Positions 630 to 640 (GRNKATAHKPA) are enriched in basic residues. Over residues 818–829 (PTEVAEKIPEKK) the composition is skewed to basic and acidic residues. 2 stretches are compositionally biased toward pro residues: residues 844–853 (CISPAPPHKP) and 874–883 (FPPPLSPLPE).

This sequence belongs to the AF4 family.

The protein localises to the nucleus speckle. RNA-binding protein. Might be involved in alternative splicing regulation through an interaction with G-quartet RNA structure. In Pan troglodytes (Chimpanzee), this protein is AF4/FMR2 family member 2 (AFF2).